Here is a 124-residue protein sequence, read N- to C-terminus: Fluoride-specific ion channel FluC (124 aa).

The next 4 membrane-spanning stretches (helical) occupy residues 1–21, 35–55, 68–88, and 99–119; these read MGVVFAVALGGAIGSALRFLL, VGTLFVNLVGAFFIGFFFAYL, LLITGLLGGLTTFSTYSYESF, and FLAYTLGTNVLGIFFTFLGYI. Na(+) is bound by residues Gly-75 and Thr-78.

This sequence belongs to the fluoride channel Fluc/FEX (TC 1.A.43) family.

It is found in the cell inner membrane. The catalysed reaction is fluoride(in) = fluoride(out). Its activity is regulated as follows. Na(+) is not transported, but it plays an essential structural role and its presence is essential for fluoride channel function. Fluoride-specific ion channel. Important for reducing fluoride concentration in the cell, thus reducing its toxicity. The polypeptide is Fluoride-specific ion channel FluC (Aquifex aeolicus (strain VF5)).